The sequence spans 213 residues: Putative cytochrome c-type biogenesis protein HI_1454 (213 aa).

6 helical membrane-spanning segments follow: residues 15–35, 46–66, 77–97, 118–138, 154–174, and 192–212; these read GLAS…FGIL, FLFI…FGFL, IIAG…FKIG, AFVL…PILA, ASMM…FSFF, and FKIG…TNNF.

Belongs to the DsbD family.

The protein resides in the cell membrane. In terms of biological role, could be involved in cytochrome c synthesis. In Haemophilus influenzae (strain ATCC 51907 / DSM 11121 / KW20 / Rd), this protein is Putative cytochrome c-type biogenesis protein HI_1454.